The sequence spans 439 residues: D-inositol 3-phosphate glycosyltransferase (439 aa).

His21 is a 1D-myo-inositol 3-phosphate binding site. UDP-N-acetyl-alpha-D-glucosamine is bound by residues 27-28 and Gly35; that span reads QP. 1D-myo-inositol 3-phosphate-binding positions include 32–37, Lys90, Tyr123, Thr147, and Arg167; that span reads DAGGMN. 3 residues coordinate UDP-N-acetyl-alpha-D-glucosamine: Arg241, Lys246, and Gln299. 3 residues coordinate Mg(2+): Tyr308, Arg309, and Ala311. Positions 321 and 329 each coordinate UDP-N-acetyl-alpha-D-glucosamine. A Mg(2+)-binding site is contributed by Thr335.

The protein belongs to the glycosyltransferase group 1 family. MshA subfamily. In terms of assembly, homodimer.

The catalysed reaction is 1D-myo-inositol 3-phosphate + UDP-N-acetyl-alpha-D-glucosamine = 1D-myo-inositol 2-acetamido-2-deoxy-alpha-D-glucopyranoside 3-phosphate + UDP + H(+). Functionally, catalyzes the transfer of a N-acetyl-glucosamine moiety to 1D-myo-inositol 3-phosphate to produce 1D-myo-inositol 2-acetamido-2-deoxy-glucopyranoside 3-phosphate in the mycothiol biosynthesis pathway. This Mycobacterium sp. (strain JLS) protein is D-inositol 3-phosphate glycosyltransferase.